Reading from the N-terminus, the 402-residue chain is Arginine deiminase (402 aa).

Residue C392 is the Amidino-cysteine intermediate of the active site.

It belongs to the arginine deiminase family.

It is found in the cytoplasm. The enzyme catalyses L-arginine + H2O = L-citrulline + NH4(+). It functions in the pathway amino-acid degradation; L-arginine degradation via ADI pathway; carbamoyl phosphate from L-arginine: step 1/2. The sequence is that of Arginine deiminase (arcA) from Mycobacterium bovis (strain ATCC BAA-935 / AF2122/97).